A 359-amino-acid chain; its full sequence is Methyltransferase eqxD (359 aa).

Residues 198-199 (GG), aspartate 224, 248-249 (SF), arginine 264, and arginine 265 each bind S-adenosyl-L-methionine.

The protein belongs to the class I-like SAM-binding methyltransferase superfamily. Cation-independent O-methyltransferase family.

It carries out the reaction trichosetin + S-adenosyl-L-methionine = equisetin + S-adenosyl-L-homocysteine + H(+). Its pathway is mycotoxin biosynthesis. In terms of biological role, methyltransferase; part of the gene cluster that mediates the biosynthesis of equisetin, a trans-fused decalin-containing tetramic acid with antimicrobial activity. The PKS module of eqxS together with the enoylreductase eqxC catalyze the formation of the polyketide unit which is then conjugated to L-serine by the condensation domain of the eqxS NRPS module. Activity of the Dieckmann cyclase domain (RED) results in release of the Dieckmann product intermediate. Diels-Alderase eqx3 is involved in endo-selective Diels-Alder cycloaddition to form the decalin ring, leading to the production of N-desmethylequisetin also called trichosetin. Subsequent N-methylation is carried out by eqxD to give equisetin. This Fusarium heterosporum protein is Methyltransferase eqxD.